A 291-amino-acid polypeptide reads, in one-letter code: tRNA dimethylallyltransferase (291 aa).

ATP is bound at residue 5-12; sequence GPTAGGKS. 7–12 contacts substrate; it reads TAGGKS. Positions 30 to 33 are interaction with substrate tRNA; that stretch reads DSMQ.

This sequence belongs to the IPP transferase family. Monomer. Requires Mg(2+) as cofactor.

The catalysed reaction is adenosine(37) in tRNA + dimethylallyl diphosphate = N(6)-dimethylallyladenosine(37) in tRNA + diphosphate. Its function is as follows. Catalyzes the transfer of a dimethylallyl group onto the adenine at position 37 in tRNAs that read codons beginning with uridine, leading to the formation of N6-(dimethylallyl)adenosine (i(6)A). This is tRNA dimethylallyltransferase from Frankia casuarinae (strain DSM 45818 / CECT 9043 / HFP020203 / CcI3).